The primary structure comprises 57 residues: Large ribosomal subunit protein bL32 (57 aa).

A compositionally biased stretch (basic residues) spans Met1 to Gln19. Residues Met1–Trp20 form a disordered region.

Belongs to the bacterial ribosomal protein bL32 family.

The sequence is that of Large ribosomal subunit protein bL32 from Corynebacterium aurimucosum (strain ATCC 700975 / DSM 44827 / CIP 107346 / CN-1) (Corynebacterium nigricans).